Consider the following 213-residue polypeptide: Pyridoxine/pyridoxamine 5'-phosphate oxidase (213 aa).

Residues 60-65, 75-76, lysine 82, and glutamine 104 contribute to the FMN site; these read RMVLMK and YS. Lysine 65 is a substrate binding site. Residues tyrosine 122 and arginine 126 each contribute to the substrate site. FMN contacts are provided by residues 139 to 140 and tryptophan 184; that span reads QS. 190–192 serves as a coordination point for substrate; the sequence is RLH. Arginine 194 contacts FMN.

Belongs to the pyridoxamine 5'-phosphate oxidase family. Homodimer. FMN is required as a cofactor.

It carries out the reaction pyridoxamine 5'-phosphate + O2 + H2O = pyridoxal 5'-phosphate + H2O2 + NH4(+). The catalysed reaction is pyridoxine 5'-phosphate + O2 = pyridoxal 5'-phosphate + H2O2. The protein operates within cofactor metabolism; pyridoxal 5'-phosphate salvage; pyridoxal 5'-phosphate from pyridoxamine 5'-phosphate: step 1/1. Its pathway is cofactor metabolism; pyridoxal 5'-phosphate salvage; pyridoxal 5'-phosphate from pyridoxine 5'-phosphate: step 1/1. Catalyzes the oxidation of either pyridoxine 5'-phosphate (PNP) or pyridoxamine 5'-phosphate (PMP) into pyridoxal 5'-phosphate (PLP). The sequence is that of Pyridoxine/pyridoxamine 5'-phosphate oxidase from Nitrobacter hamburgensis (strain DSM 10229 / NCIMB 13809 / X14).